We begin with the raw amino-acid sequence, 424 residues long: Phosphoribosylamine--glycine ligase (424 aa).

One can recognise an ATP-grasp domain in the interval 111–312; the sequence is KAFVKECGIK…LLDLCLATAK (202 aa). 137–189 serves as a coordination point for ATP; that stretch reads IQNASFPLVIKALNKNTSIVYQEEEAIKILEDAFKQSNEPVIIEPFLEGFELS.

The protein belongs to the GARS family.

The catalysed reaction is 5-phospho-beta-D-ribosylamine + glycine + ATP = N(1)-(5-phospho-beta-D-ribosyl)glycinamide + ADP + phosphate + H(+). It functions in the pathway purine metabolism; IMP biosynthesis via de novo pathway; N(1)-(5-phospho-D-ribosyl)glycinamide from 5-phospho-alpha-D-ribose 1-diphosphate: step 2/2. In Helicobacter pylori (strain ATCC 700392 / 26695) (Campylobacter pylori), this protein is Phosphoribosylamine--glycine ligase (purD).